Consider the following 659-residue polypeptide: Forkhead box protein P1-B (659 aa).

2 stretches are compositionally biased toward polar residues: residues 1–16 and 32–41; these read MMQESGTEAANGTAHQ and KSTTPSSDIT. 2 disordered regions span residues 1–41 and 229–263; these read MMQE…SDIT and ENSVTNNGHRGLDLSSPSPVPLKNHNQHGSTNGQY. The C2H2-type zinc-finger motif lies at 289 to 314; it reads GVCKWPGCEAVFEDFQSFLKHLNNEH. The interval 331–352 is leucine-zipper; that stretch reads VQQLELQLAKDKERLQAMMTHL. Residues 365–369 form a CTBP1-binding region; it reads PLNLV. The interval 379–413 is disordered; the sequence is PAASPPLSLPQTPTTPTAPLTPLSQTHSVITPTSL. A compositionally biased stretch (low complexity) spans 387-404; it reads LPQTPTTPTAPLTPLSQT. The fork-head DNA-binding region spans 448–538; that stretch reads RPPFTYASLI…PQKISGSPAL (91 aa). The interval 590 to 659 is disordered; the sequence is GAMDHGNSNG…EDDHGTEDML (70 aa). Positions 595–605 are enriched in polar residues; that stretch reads GNSNGSDSSPG. Basic and acidic residues predominate over residues 641 to 659; the sequence is PDFDHHRDYEDDHGTEDML.

As to expression, shows complex and dynamic expression during early embryonic development. Prominent in many regions of the developing central nervous system, particularly in midbrain-hindbrain boundary, hindbrain and spinal cord. Strongly expressed in the retina, ear, branchial arches, hatching gland, heart, pronephric duct, gut, proctodeum, pectoral fin and swim bladder.

The protein localises to the nucleus. Transcriptional repressor. This Danio rerio (Zebrafish) protein is Forkhead box protein P1-B (foxp1b).